A 396-amino-acid chain; its full sequence is Cyclic GMP-AMP synthase-like receptor (396 aa).

ATP-binding positions include S63 and 75–77 (EFD). Mg(2+) contacts are provided by E75, D77, and D194. D194 lines the GTP pocket. ATP contacts are provided by residues 241–244 (QEQE), K262, and 275–279 (SYYLK). The Mn(2+) site is built by V286, E287, and D292. A disordered region spans residues 376–396 (IMNGGNPQQSANAENGSCLSM). The span at 380–396 (GNPQQSANAENGSCLSM) shows a compositional bias: polar residues.

Belongs to the mab-21 family. The cofactor is Mg(2+). It depends on Mn(2+) as a cofactor.

The enzyme catalyses GTP + ATP = 2',3'-cGAMP + 2 diphosphate. The catalysed reaction is GTP + ATP = pppGp(2'-5')A + diphosphate. It catalyses the reaction pppGp(2'-5')A = 2',3'-cGAMP + diphosphate. In terms of biological role, nucleotidyltransferase that catalyzes the formation of cyclic GMP-AMP (2',3'-cGAMP) from ATP and GTP and plays a key role in innate immunity. Acts as a key sensor of double-stranded RNA (dsRNA), the presence of dsRNA in the cytoplasm being a danger signal that triggers the immune responses. Directly binds dsRNA, activating the nucleotidyltransferase activity, leading to synthesis of 2',3'-cGAMP, a second messenger that binds to and activates Sting, thereby triggering the immune response via activation of the NF-kappa-B transcription factor. The polypeptide is Cyclic GMP-AMP synthase-like receptor (Aethina tumida (Small hive beetle)).